The chain runs to 136 residues: Flagellar assembly factor FliW 2 (136 aa).

Belongs to the FliW family. As to quaternary structure, interacts with translational regulator CsrA and flagellin(s).

The protein resides in the cytoplasm. Its function is as follows. Acts as an anti-CsrA protein, binds CsrA and prevents it from repressing translation of its target genes, one of which is flagellin. Binds to flagellin and participates in the assembly of the flagellum. The chain is Flagellar assembly factor FliW 2 from Wolinella succinogenes (strain ATCC 29543 / DSM 1740 / CCUG 13145 / JCM 31913 / LMG 7466 / NCTC 11488 / FDC 602W) (Vibrio succinogenes).